The sequence spans 138 residues: Large ribosomal subunit protein uL16c (138 aa).

Belongs to the universal ribosomal protein uL16 family. As to quaternary structure, part of the 50S ribosomal subunit.

It is found in the plastid. It localises to the chloroplast. The protein is Large ribosomal subunit protein uL16c of Tetradesmus obliquus (Green alga).